A 43-amino-acid polypeptide reads, in one-letter code: uncharacterized protein (43 aa).

The segment at 13 to 43 is disordered; the sequence is QLPRLSRPRQSHLPAQTPQPRLSYPKTRRQI.

This is an uncharacterized protein from Clover yellow mosaic virus (CYMV).